Here is a 420-residue protein sequence, read N- to C-terminus: 5'-deoxyadenosine deaminase (420 aa).

Residues H55 and H57 each contribute to the Zn(2+) site. Substrate contacts are provided by E84 and H176. H203 lines the Zn(2+) pocket. E206 and D292 together coordinate substrate. D292 serves as a coordination point for Zn(2+).

It belongs to the metallo-dependent hydrolases superfamily. MTA/SAH deaminase family. As to quaternary structure, homotetramer. The cofactor is Zn(2+).

It catalyses the reaction 5'-deoxyadenosine + H2O + H(+) = 5'-deoxyinosine + NH4(+). The enzyme catalyses S-adenosyl-L-homocysteine + H2O + H(+) = S-inosyl-L-homocysteine + NH4(+). It carries out the reaction S-methyl-5'-thioadenosine + H2O + H(+) = S-methyl-5'-thioinosine + NH4(+). The catalysed reaction is adenosine + H2O + H(+) = inosine + NH4(+). It participates in amino-acid biosynthesis; S-adenosyl-L-methionine biosynthesis. Its function is as follows. Catalyzes the deamination of three SAM-derived enzymatic products, namely 5'-deoxyadenosine, S-adenosyl-L-homocysteine, and 5'-methylthioadenosine, to produce the inosine analogs. Can also deaminate adenosine. The preferred substrate for this enzyme is 5'-deoxyadenosine, but all these substrates are efficiently deaminated. Likely functions in a S-adenosyl-L-methionine (SAM) recycling pathway from S-adenosyl-L-homocysteine (SAH) produced from SAM-dependent methylation reactions. May also be involved in the recycling of 5'-deoxyadenosine, whereupon the 5'-deoxyribose moiety of 5'-deoxyinosine is further metabolized to deoxyhexoses used for the biosynthesis of aromatic amino acids in methanogens. The sequence is that of 5'-deoxyadenosine deaminase from Methanocaldococcus jannaschii (strain ATCC 43067 / DSM 2661 / JAL-1 / JCM 10045 / NBRC 100440) (Methanococcus jannaschii).